The following is a 1088-amino-acid chain: Probable cellulose synthase A catalytic subunit 9 [UDP-forming] (1088 aa).

M1 is subject to N-acetylmethionine. Residues M1 to M283 lie on the Cytoplasmic side of the membrane. Residues C39, C42, C58, C61, C66, C69, C81, and C84 each contribute to the Zn(2+) site. The RING-type; degenerate zinc finger occupies C39–G85. The helical transmembrane segment at L284–V304 threads the bilayer. The Extracellular segment spans residues N305 to D306. A helical transmembrane segment spans residues A307–L327. Residues D328–S871 lie on the Cytoplasmic side of the membrane. The UDP-alpha-D-glucose site is built by S366, K372, E373, D402, and K543. The active site involves D402. Mn(2+) contacts are provided by K544 and D568. The active site involves D788. The helical transmembrane segment at L872–V892 threads the bilayer. At P893 to N897 the chain is on the extracellular side. A helical transmembrane segment spans residues Y898 to M918. The Cytoplasmic segment spans residues Q919 to Q933. The chain crosses the membrane as a helical span at residues F934–V954. The Extracellular segment spans residues L955 to T983. N-linked (GlcNAc...) asparagine glycosylation occurs at N961. Residues S984–V1004 form a helical membrane-spanning segment. The Cytoplasmic portion of the chain corresponds to S1005–W1015. Residues G1016 to L1036 form a helical membrane-spanning segment. Residues K1037–R1045 lie on the Extracellular side of the membrane. The chain crosses the membrane as a helical span at residues V1046 to V1066. Residues R1067–K1088 are Cytoplasmic-facing.

Belongs to the glycosyltransferase 2 family. Plant cellulose synthase subfamily. It depends on Mn(2+) as a cofactor. Zn(2+) is required as a cofactor. Expressed in young plants, stems and flowers.

It localises to the cell membrane. The catalysed reaction is [(1-&gt;4)-beta-D-glucosyl](n) + UDP-alpha-D-glucose = [(1-&gt;4)-beta-D-glucosyl](n+1) + UDP + H(+). Its pathway is glycan metabolism; plant cellulose biosynthesis. Probable catalytic subunit of cellulose synthase terminal complexes ('rosettes'), required for beta-1,4-glucan microfibril crystallization, a major mechanism of the cell wall formation. The protein is Probable cellulose synthase A catalytic subunit 9 [UDP-forming] of Arabidopsis thaliana (Mouse-ear cress).